A 110-amino-acid polypeptide reads, in one-letter code: Circadian clock oscillator protein KaiB (110 aa).

The protein belongs to the KaiB family. The KaiABC complex composition changes during the circadian cycle to control KaiC phosphorylation. Complexes KaiC(6), KaiA(2-4):KaiC(6), KaiB(6):KaiC(6) and KaiC(6):KaiB(6):KaiA(12) are among the most important forms, many form cooperatively. Undergoes a major conformational rearrangment; in the free state forms homotetramers as a dimer of dimers. When bound to the CI domain of KaiC switches to a monomeric thioredoxin-fold (KaiB(fs)). KaiB(fs) binds CikA, leading it to dephosphorylate phospho-RpaA.

Key component of the KaiABC oscillator complex, which constitutes the main circadian regulator in cyanobacteria. Complex composition changes during the circadian cycle to control KaiC phosphorylation. KaiA stimulates KaiC autophosphorylation, while KaiB sequesters KaiA, leading to KaiC autodephosphorylation. Phospho-Ser-431 KaiC accumulation triggers binding of KaiB to form the KaiB(6):KaiC(6) complex, leading to changes in output regulators CikA and SasA. KaiB switches to a thioredoxin-like fold (KaiB(fs)) when bound to KaiC. KaiB(6):KaiC(6) formation exposes a site for KaiA binding that sequesters KaiA from KaiC, making the KaiC(6):KaiB(6):KaiA(12) complex that results in KaiC autodephosphorylation. In terms of biological role, a metamorphic protein which reversibly switches between an inactive tetrameric fold and a rare, thioredoxin-like monomeric fold (KaiB(fs)). KaiB(fs) binds phospho-KaiC, KaiA and CikA. KaiA and CikA compete for binding to KaiB(fs), and KaiB(fs) and SasA compete for binding to KaiC, thus the clock oscillator and output signal pathway are tightly coupled. The polypeptide is Circadian clock oscillator protein KaiB (Synechococcus sp. (strain RCC307)).